Consider the following 118-residue polypeptide: Large ribosomal subunit protein uL18 (118 aa).

The protein belongs to the universal ribosomal protein uL18 family. As to quaternary structure, part of the 50S ribosomal subunit; part of the 5S rRNA/L5/L18/L25 subcomplex. Contacts the 5S and 23S rRNAs.

Functionally, this is one of the proteins that bind and probably mediate the attachment of the 5S RNA into the large ribosomal subunit, where it forms part of the central protuberance. In Phenylobacterium zucineum (strain HLK1), this protein is Large ribosomal subunit protein uL18.